Consider the following 207-residue polypeptide: Homeobox protein BarH-like 1 (207 aa).

The segment at residues Gly95–Val154 is a DNA-binding region (homeobox). Residues Gly157–Glu207 form a disordered region. Residues Glu183–Glu207 show a composition bias toward basic and acidic residues.

It belongs to the BAR homeobox family. In terms of tissue distribution, expressed predominantly in the facial primordia, developing stomach, and proximal limbs.

Its subcellular location is the nucleus. In terms of biological role, transcription factor, which is involved in craniofacial development, in odontogenic region definition, and in stomach organogenesis. Binds to a regulatory module of the NCAM promoter. This Gallus gallus (Chicken) protein is Homeobox protein BarH-like 1 (BARX1).